Reading from the N-terminus, the 209-residue chain is Ribosomal RNA large subunit methyltransferase E (209 aa).

Positions 63, 65, 83, 99, and 124 each coordinate S-adenosyl-L-methionine. Lys164 functions as the Proton acceptor in the catalytic mechanism.

This sequence belongs to the class I-like SAM-binding methyltransferase superfamily. RNA methyltransferase RlmE family.

Its subcellular location is the cytoplasm. It catalyses the reaction uridine(2552) in 23S rRNA + S-adenosyl-L-methionine = 2'-O-methyluridine(2552) in 23S rRNA + S-adenosyl-L-homocysteine + H(+). Specifically methylates the uridine in position 2552 of 23S rRNA at the 2'-O position of the ribose in the fully assembled 50S ribosomal subunit. The sequence is that of Ribosomal RNA large subunit methyltransferase E from Shewanella amazonensis (strain ATCC BAA-1098 / SB2B).